We begin with the raw amino-acid sequence, 458 residues long: Inner kinetochore subunit CHL4 (458 aa).

This sequence belongs to the CENP-N/CHL4 family. As to quaternary structure, forms a heterodimer with IML3. CHL4-IML3 is part of a larger constitutive centromere-associated network (CCAN) (also known as central kinetochore CTF19 complex in yeast), which is composed of at least AME1, CHL4, CNN1, CTF3, CTF19, IML3, MCM16, MCM21, MCM22, MHF1, MHF2, MIF2, NKP1, NKP2, OKP1 and WIP1. Interacts with CTF3 and CTF19.

The protein localises to the nucleus. It is found in the chromosome. Its subcellular location is the centromere. The protein resides in the kinetochore. Its function is as follows. Component of the kinetochore, a multiprotein complex that assembles on centromeric DNA and attaches chromosomes to spindle microtubules, mediating chromosome segregation and sister chromatid segregation during meiosis and mitosis. Component of the inner kinetochore constitutive centromere-associated network (CCAN), which serves as a structural platform for outer kinetochore assembly. In Saccharomyces cerevisiae (strain ATCC 204508 / S288c) (Baker's yeast), this protein is Inner kinetochore subunit CHL4 (CHL4).